A 195-amino-acid polypeptide reads, in one-letter code: UPF0314 protein RL4541 (195 aa).

4 helical membrane-spanning segments follow: residues 15 to 35 (FWFV…YMMG), 64 to 84 (WYTP…HLIL), 127 to 147 (GDSI…FFFA), and 150 to 170 (APVA…GYII).

This sequence belongs to the UPF0314 family.

Its subcellular location is the cell membrane. This chain is UPF0314 protein RL4541, found in Rhizobium johnstonii (strain DSM 114642 / LMG 32736 / 3841) (Rhizobium leguminosarum bv. viciae).